The sequence spans 412 residues: MESIRRNSRKEGIKERIFLTIGLLVLSRLGTFIPVPGVDHDAFYQSISTNPIVTFLNIFSGGGFASIGIFALGIVPYINASIVIQLATTSIPNLEKLQKEEGEAGRQKISQITRYRALGWAAIQSLGVSFWVRPYVFNWDSQFVVQMTLALTTGSMLIMWFSEQITEKGIGNGPSLLIFINIIAGLPKLIQQKSNAISSTNQTTELVVLASISVYDSRIFIRDRRYYILQTVGRHCKQTSYLPLRLNQGGVMPIIFASAILVLPAYLGQVIQNQFVLKLVTLLSPNSSDKNLYLIFYFSLILFFSYFYASLIINPNDVSQNLKKMESSIPGVRPGKATTDYLQKTLNRLTFLGALFLAFIAVVPSIIENITSISTFKGLGATSLLILVGVAIDTSRQIQTYLISRNYENIMK.

The next 9 helical transmembrane spans lie at 17 to 37 (IFLT…PVPG), 58 to 78 (IFSG…VPYI), 117 to 137 (ALGW…PYVF), 143 to 163 (FVVQ…WFSE), 170 to 190 (IGNG…PKLI), 251 to 271 (VMPI…GQVI), 293 to 313 (YLIF…SLII), 350 to 370 (TFLG…IENI), and 372 to 392 (SIST…GVAI).

Belongs to the SecY/SEC61-alpha family. In terms of assembly, component of the plastid Sec protein translocase complex, which is composed of at least SecY and SecE.

It is found in the plastid. The protein localises to the chloroplast thylakoid membrane. Its function is as follows. The central subunit of the protein translocation channel SecYE. Consists of two halves formed by TMs 1-5 and 6-10. These two domains form a lateral gate at the front which open onto the bilayer between TMs 2 and 7, and are clamped together by SecE at the back. The channel is closed by both a pore ring composed of hydrophobic SecY resides and a short helix (helix 2A) on the extracellular side of the membrane which forms a plug. In Pyrenomonas salina, this protein is Protein translocase subunit SecY.